The sequence spans 200 residues: MATEAPIEATEVPPASATETVAKQPHKLERRWTFWFDNQSKPKQGAAWGSSLRKAYTFETVEEFWSLYDQIFKPSKLTANADFHLFKAGIEPKWEDPECASGGKWTVTSSRKANLETMWLETLMALVGEQFDESEEICGVVASVRRSQDKLSLWTKTASNEAIQMSIGRKWKEIIDAEKISYSFHDDSKRERSAKSRYTV.

Residues 1–22 (MATEAPIEATEVPPASATETVA) are disordered. MRNA-binding positions include 44–49 (QGAAWG), lysine 76, and 94–95 (WE). A disulfide bond links cysteine 99 and cysteine 138. MRNA-binding positions include 145 to 150 (RRSQDK) and 189 to 192 (KRER).

Belongs to the eukaryotic initiation factor 4E family. In terms of assembly, EIF4F is a multi-subunit complex, the composition of which varies with external and internal environmental conditions. It is composed of at least EIF4A, EIF4E and EIF4G. EIF4E is also known to interact with other partners. In higher plants two isoforms of EIF4F have been identified, named isoform EIF4F and isoform EIF(iso)4F. Isoform EIF4F has subunits p220 and p26, whereas isoform EIF(iso)4F has subunits p82 and p28. (Microbial infection) Interacts with viral genome-linked protein (VPg); this interaction is possible in susceptible hosts but impaired in resistant plants. According to the redox status, the Cys-99-Cys-138 disulfide bridge may have a role in regulating protein function by affecting its ability to bind capped mRNA. As to expression, expressed ubiquitously in seedlings, roots, leaves, sepals, petals, anthers and dehisced pollen, with highest levels in pollen, maturing anthers and roots. Strongly expressed in susceptible plants but not in resistant ones.

The protein resides in the cytoplasm. It is found in the nucleus. Functionally, component of the protein complex eIF4F, which is involved in the recognition of the mRNA cap, ATP-dependent unwinding of 5'-terminal secondary structure and recruitment of mRNA to the ribosome. Recognizes and binds the 7-methylguanosine-containing mRNA cap during an early step in the initiation of protein synthesis and facilitates ribosome binding by inducing the unwinding of the mRNAs secondary structures. Key component of recessive resistance to potyviruses. Its function is as follows. (Microbial infection) Susceptibility host factor required for viral infection (e.g. potato virus Y (PVY) and pepper mottle virus (PepMoV)) by recruiting viral RNAs to the host ribosomal complex via an interaction with viral genome-linked protein (VPg). The polypeptide is Eukaryotic translation initiation factor isoform 4E (Nicotiana tabacum (Common tobacco)).